The chain runs to 561 residues: DNA ligase B (561 aa).

The active-site N6-AMP-lysine intermediate is Lys-125.

Belongs to the NAD-dependent DNA ligase family. LigB subfamily.

It carries out the reaction NAD(+) + (deoxyribonucleotide)n-3'-hydroxyl + 5'-phospho-(deoxyribonucleotide)m = (deoxyribonucleotide)n+m + AMP + beta-nicotinamide D-nucleotide.. Its function is as follows. Catalyzes the formation of phosphodiester linkages between 5'-phosphoryl and 3'-hydroxyl groups in double-stranded DNA using NAD as a coenzyme and as the energy source for the reaction. The protein is DNA ligase B of Salmonella agona (strain SL483).